We begin with the raw amino-acid sequence, 95 residues long: UPF0235 protein Swoo_1329 (95 aa).

It belongs to the UPF0235 family.

This Shewanella woodyi (strain ATCC 51908 / MS32) protein is UPF0235 protein Swoo_1329.